The following is a 134-amino-acid chain: Phosphoribosyl-AMP cyclohydrolase (134 aa).

Mg(2+) is bound at residue aspartate 77. Cysteine 78 is a binding site for Zn(2+). Residues aspartate 79 and aspartate 81 each coordinate Mg(2+). Zn(2+)-binding residues include cysteine 95 and cysteine 102.

It belongs to the PRA-CH family. As to quaternary structure, homodimer. It depends on Mg(2+) as a cofactor. The cofactor is Zn(2+).

The protein localises to the cytoplasm. It carries out the reaction 1-(5-phospho-beta-D-ribosyl)-5'-AMP + H2O = 1-(5-phospho-beta-D-ribosyl)-5-[(5-phospho-beta-D-ribosylamino)methylideneamino]imidazole-4-carboxamide. It participates in amino-acid biosynthesis; L-histidine biosynthesis; L-histidine from 5-phospho-alpha-D-ribose 1-diphosphate: step 3/9. Catalyzes the hydrolysis of the adenine ring of phosphoribosyl-AMP. This Pseudomonas paraeruginosa (strain DSM 24068 / PA7) (Pseudomonas aeruginosa (strain PA7)) protein is Phosphoribosyl-AMP cyclohydrolase.